The sequence spans 321 residues: Ubiquitin carboxyl-terminal hydrolase ubh-4 (321 aa).

One can recognise a UCH catalytic domain in the interval 6–220 (SWCLIESDPG…ITFNLMALVP (215 aa)). Catalysis depends on Cys-83, which acts as the Nucleophile. His-158 serves as the catalytic Proton donor. The ULD domain occupies 273–301 (NYTPFVIELMKILAKEGKLVGLVDNAYQA).

It belongs to the peptidase C12 family. As to quaternary structure, interacts with proteasome 19S subunit rpn-13. As to expression, highly expressed in intestine and to a lesser extent in other tissues including muscles and neurons.

The enzyme catalyses Thiol-dependent hydrolysis of ester, thioester, amide, peptide and isopeptide bonds formed by the C-terminal Gly of ubiquitin (a 76-residue protein attached to proteins as an intracellular targeting signal).. In terms of biological role, ubiquitin-protein hydrolase involved both in the processing of ubiquitin precursors and of ubiquitinated proteins. This enzyme is a thiol protease that recognizes and hydrolyzes a peptide bond at the C-terminal glycine of ubiquitin. The protein is Ubiquitin carboxyl-terminal hydrolase ubh-4 of Caenorhabditis elegans.